Here is a 159-residue protein sequence, read N- to C-terminus: Protein A40 (159 aa).

Residues 1–9 (MNKHKTDYA) are Cytoplasmic-facing. A helical; Signal-anchor for type II membrane protein membrane pass occupies residues 10–30 (GYACCVICGLIVGIIFTATLL). At 31–159 (KVVERKLVHT…TPKLHSCYTI (129 aa)) the chain is on the extracellular side. The C-type lectin domain maps to 63-159 (YNNKCIHLST…TPKLHSCYTI (97 aa)).

Belongs to the poxviridae A40 protein family.

The protein resides in the host membrane. This is Protein A40 from Bos taurus (Bovine).